Reading from the N-terminus, the 539-residue chain is Membrane protein insertase YidC (539 aa).

The chain crosses the membrane as a helical span at residues N6 to A26. Polar residues predominate over residues E35–P44. The disordered stretch occupies residues E35–A55. 4 helical membrane-spanning segments follow: residues S341–V361, L416–L436, L454–I474, and P495–V515.

It belongs to the OXA1/ALB3/YidC family. Type 1 subfamily. As to quaternary structure, interacts with the Sec translocase complex via SecD. Specifically interacts with transmembrane segments of nascent integral membrane proteins during membrane integration.

It is found in the cell inner membrane. Functionally, required for the insertion and/or proper folding and/or complex formation of integral membrane proteins into the membrane. Involved in integration of membrane proteins that insert both dependently and independently of the Sec translocase complex, as well as at least some lipoproteins. Aids folding of multispanning membrane proteins. This Vibrio atlanticus (strain LGP32) (Vibrio splendidus (strain Mel32)) protein is Membrane protein insertase YidC.